The sequence spans 518 residues: 2-isopropylmalate synthase (518 aa).

Residues 4-266 (INVFDTTLRD…DSSLNLHELK (263 aa)) form the Pyruvate carboxyltransferase domain. Residues D13, H201, H203, and N237 each coordinate Mn(2+). The interval 391–518 (EFLSLQVHYG…GLKRQTAVGS (128 aa)) is regulatory domain.

This sequence belongs to the alpha-IPM synthase/homocitrate synthase family. LeuA type 1 subfamily. Homodimer. Mn(2+) is required as a cofactor.

The protein resides in the cytoplasm. It carries out the reaction 3-methyl-2-oxobutanoate + acetyl-CoA + H2O = (2S)-2-isopropylmalate + CoA + H(+). The protein operates within amino-acid biosynthesis; L-leucine biosynthesis; L-leucine from 3-methyl-2-oxobutanoate: step 1/4. In terms of biological role, catalyzes the condensation of the acetyl group of acetyl-CoA with 3-methyl-2-oxobutanoate (2-ketoisovalerate) to form 3-carboxy-3-hydroxy-4-methylpentanoate (2-isopropylmalate). The sequence is that of 2-isopropylmalate synthase from Bacillus velezensis (strain DSM 23117 / BGSC 10A6 / LMG 26770 / FZB42) (Bacillus amyloliquefaciens subsp. plantarum).